A 139-amino-acid polypeptide reads, in one-letter code: Small ribosomal subunit protein uS12 (139 aa).

Residues methionine 1–arginine 44 are disordered. Over residues arginine 9 to lysine 18 the composition is skewed to basic residues. Positions serine 19–lysine 39 are enriched in polar residues. The residue at position 102 (aspartate 102) is a 3-methylthioaspartic acid.

Belongs to the universal ribosomal protein uS12 family. In terms of assembly, part of the 30S ribosomal subunit. Contacts proteins S8 and S17. May interact with IF1 in the 30S initiation complex.

With S4 and S5 plays an important role in translational accuracy. In terms of biological role, interacts with and stabilizes bases of the 16S rRNA that are involved in tRNA selection in the A site and with the mRNA backbone. Located at the interface of the 30S and 50S subunits, it traverses the body of the 30S subunit contacting proteins on the other side and probably holding the rRNA structure together. The combined cluster of proteins S8, S12 and S17 appears to hold together the shoulder and platform of the 30S subunit. This chain is Small ribosomal subunit protein uS12, found in Lysinibacillus sphaericus (strain C3-41).